A 236-amino-acid polypeptide reads, in one-letter code: Purine nucleoside phosphorylase DeoD-type 2 (236 aa).

H5 serves as a coordination point for a purine D-ribonucleoside. Phosphate is bound by residues G21, R25, R44, and 88–91; that span reads RVGS. Residues 180–182 and 204–205 contribute to the a purine D-ribonucleoside site; these read DME and SD. The active-site Proton donor is D205.

It belongs to the PNP/UDP phosphorylase family. As to quaternary structure, homohexamer; trimer of homodimers.

It carries out the reaction a purine D-ribonucleoside + phosphate = a purine nucleobase + alpha-D-ribose 1-phosphate. It catalyses the reaction a purine 2'-deoxy-D-ribonucleoside + phosphate = a purine nucleobase + 2-deoxy-alpha-D-ribose 1-phosphate. Functionally, catalyzes the reversible phosphorolytic breakdown of the N-glycosidic bond in the beta-(deoxy)ribonucleoside molecules, with the formation of the corresponding free purine bases and pentose-1-phosphate. The polypeptide is Purine nucleoside phosphorylase DeoD-type 2 (Vibrio parahaemolyticus serotype O3:K6 (strain RIMD 2210633)).